Here is a 52-residue protein sequence, read N- to C-terminus: Phospholamban (52 aa).

Residue M1 is modified to N-acetylmethionine. Residues 1 to 31 are Cytoplasmic-facing; that stretch reads MEKVQYLTRSAIRRASTIEMPQQARQKLQNL. S16 carries the post-translational modification Phosphoserine; by PKA and DMPK. Residues 16–22 are involved in HAX1 binding; sequence STIEMPQ. T17 carries the post-translational modification Phosphothreonine; by CaMK2. A helical transmembrane segment spans residues 32-52; the sequence is FINFCLILICLLLICIIVMLL. Residue C36 is the site of S-palmitoyl cysteine attachment.

The protein belongs to the phospholamban family. As to quaternary structure, homopentamer. Can also form heterooligomers with other sarcoplasmic/endoplasmic reticulum calcium ATPase (SERCA) regulators ARLN, ERLN, SLN and STRIT1/DWORF. Monomer. Interacts with HAX1. Interacts as a monomer with ATP2A2; the interaction decreases ATP2A2 Ca(2+) affinity. Interacts with VMP1; VMP1 competes with PLN and SLN to prevent them from forming an inhibitory complex with ATP2A2. Interacts with S100A1 in a Ca(2+)-dependent manner. Phosphorylation by PKA abolishes the inhibition of ATP2A2-mediated calcium uptake. Phosphorylated at Thr-17 by CaMK2, and in response to beta-adrenergic stimulation. Phosphorylation by DMPK may stimulate sarcoplasmic reticulum calcium uptake in cardiomyocytes. In terms of processing, palmitoylated by ZDHHC16, promoting formation of the homopentamer. Post-translationally, in elongated spermatids, proteolytically cleaved by SPPL2C which modulates intracellular Ca(2+) homeostasis. Heart muscle (at protein level).

Its subcellular location is the endoplasmic reticulum membrane. The protein resides in the sarcoplasmic reticulum membrane. It is found in the mitochondrion membrane. The protein localises to the membrane. Its function is as follows. Reversibly inhibits the activity of ATP2A2/SERCA2 in cardiac sarcoplasmic reticulum by decreasing the apparent affinity of the ATPase for Ca(2+). Binds preferentially to the ATP-bound E1 conformational form of ATP2A2 which predominates at low Ca(2+) concentrations during the diastolic phase of the cardiac cycle. Inhibits ATP2A2 Ca(2+) affinity by disrupting its allosteric activation by ATP. Modulates the contractility of the heart muscle in response to physiological stimuli via its effects on ATP2A2. Modulates calcium re-uptake during muscle relaxation and plays an important role in calcium homeostasis in the heart muscle. The degree of ATP2A2 inhibition depends on the oligomeric state of PLN. ATP2A2 inhibition is alleviated by PLN phosphorylation. Also inhibits the activity of ATP2A3/SERCA3. Controls intracellular Ca(2+) levels in elongated spermatids and may play a role in germ cell differentiation. In the thalamic reticular nucleus of the brain, plays a role in the regulation of sleep patterns and executive functioning. The sequence is that of Phospholamban from Homo sapiens (Human).